The primary structure comprises 292 residues: Ribosomal RNA small subunit methyltransferase I (292 aa).

Belongs to the methyltransferase superfamily. RsmI family.

Its subcellular location is the cytoplasm. It carries out the reaction cytidine(1402) in 16S rRNA + S-adenosyl-L-methionine = 2'-O-methylcytidine(1402) in 16S rRNA + S-adenosyl-L-homocysteine + H(+). In terms of biological role, catalyzes the 2'-O-methylation of the ribose of cytidine 1402 (C1402) in 16S rRNA. The sequence is that of Ribosomal RNA small subunit methyltransferase I from Buchnera aphidicola subsp. Baizongia pistaciae (strain Bp).